Consider the following 229-residue polypeptide: ATP-dependent dethiobiotin synthetase BioD (229 aa).

12 to 17 (GVGKTV) provides a ligand contact to ATP. Residue threonine 16 participates in Mg(2+) binding. Lysine 37 is an active-site residue. Threonine 41 is a binding site for substrate. ATP-binding positions include aspartate 53, 112 to 115 (EGAG), and 201 to 203 (PAG). 2 residues coordinate Mg(2+): aspartate 53 and glutamate 112.

It belongs to the dethiobiotin synthetase family. As to quaternary structure, homodimer. Requires Mg(2+) as cofactor.

The protein localises to the cytoplasm. The enzyme catalyses (7R,8S)-7,8-diammoniononanoate + CO2 + ATP = (4R,5S)-dethiobiotin + ADP + phosphate + 3 H(+). Its pathway is cofactor biosynthesis; biotin biosynthesis; biotin from 7,8-diaminononanoate: step 1/2. Functionally, catalyzes a mechanistically unusual reaction, the ATP-dependent insertion of CO2 between the N7 and N8 nitrogen atoms of 7,8-diaminopelargonic acid (DAPA, also called 7,8-diammoniononanoate) to form a ureido ring. In Mycobacterium sp. (strain JLS), this protein is ATP-dependent dethiobiotin synthetase BioD.